The primary structure comprises 428 residues: ORC1-type DNA replication protein 5 (428 aa).

ATP is bound by residues 62-66, Tyr-219, and Arg-231; that span reads TGKSL.

Belongs to the CDC6/cdc18 family.

Involved in regulation of DNA replication. The chain is ORC1-type DNA replication protein 5 (orc5) from Halobacterium salinarum (strain ATCC 700922 / JCM 11081 / NRC-1) (Halobacterium halobium).